The primary structure comprises 21 residues: Ocellatin-3 (21 aa).

Residue I21 is modified to Isoleucine amide.

In terms of tissue distribution, expressed by the skin dorsal glands.

The protein resides in the secreted. In terms of biological role, has hemolytic activity against human erythrocytes and antibacterial activity against the Gram-negative bacterium E.coli. This is Ocellatin-3 from Leptodactylus ocellatus (Argus frog).